A 151-amino-acid chain; its full sequence is Transcriptional regulator MraZ (151 aa).

SpoVT-AbrB domains follow at residues 5–52 (ANAI…PLPE) and 81–124 (AVDL…DEDA).

This sequence belongs to the MraZ family. Forms oligomers.

Its subcellular location is the cytoplasm. The protein resides in the nucleoid. The protein is Transcriptional regulator MraZ of Pseudomonas aeruginosa (strain LESB58).